The following is a 423-amino-acid chain: D-tagatose-1,6-bisphosphate aldolase subunit GatZ (423 aa).

Belongs to the GatZ/KbaZ family. GatZ subfamily. In terms of assembly, forms a complex with GatY.

The protein operates within carbohydrate metabolism; D-tagatose 6-phosphate degradation; D-glyceraldehyde 3-phosphate and glycerone phosphate from D-tagatose 6-phosphate: step 2/2. Component of the tagatose-1,6-bisphosphate aldolase GatYZ that is required for full activity and stability of the Y subunit. Could have a chaperone-like function for the proper and stable folding of GatY. When expressed alone, GatZ does not show any aldolase activity. Is involved in the catabolism of galactitol. This Salmonella choleraesuis (strain SC-B67) protein is D-tagatose-1,6-bisphosphate aldolase subunit GatZ.